Reading from the N-terminus, the 46-residue chain is Esculentin-1HSa (46 aa).

Residues cysteine 40 and cysteine 46 are joined by a disulfide bond.

In terms of tissue distribution, expressed by the skin glands.

Its subcellular location is the secreted. In terms of biological role, has antibacterial activity against the Gram-positive bacterium S.aureus ATCC 25923 (MIC=12 uM) and the Gram-negative bacterium E.coli ATCC 25726 (MIC=12 uM). This chain is Esculentin-1HSa, found in Odorrana hosii (Hose's rock frog).